A 340-amino-acid chain; its full sequence is Protein RecA (340 aa).

65-72 (GPESGGKT) is an ATP binding site.

Belongs to the RecA family.

The protein localises to the cytoplasm. Its function is as follows. Can catalyze the hydrolysis of ATP in the presence of single-stranded DNA, the ATP-dependent uptake of single-stranded DNA by duplex DNA, and the ATP-dependent hybridization of homologous single-stranded DNAs. It interacts with LexA causing its activation and leading to its autocatalytic cleavage. This chain is Protein RecA, found in Thermus aquaticus.